We begin with the raw amino-acid sequence, 334 residues long: Trans-1,2-dihydrobenzene-1,2-diol dehydrogenase (334 aa).

The protein belongs to the Gfo/Idh/MocA family. As to quaternary structure, homodimer. As to expression, small intestine.

It carries out the reaction (1R,2R)-1,2-dihydrobenzene-1,2-diol + NADP(+) = catechol + NADPH + H(+). The enzyme catalyses D-xylose + NADP(+) = D-xylono-1,5-lactone + NADPH + H(+). The protein is Trans-1,2-dihydrobenzene-1,2-diol dehydrogenase (DHDH) of Homo sapiens (Human).